Consider the following 333-residue polypeptide: 5-formaminoimidazole-4-carboxamide-1-(beta)-D-ribofuranosyl 5'-monophosphate synthetase (333 aa).

2 residues coordinate 5-amino-1-(5-phospho-beta-D-ribosyl)imidazole-4-carboxamide: H10 and S70. In terms of domain architecture, ATP-grasp spans 91–324 (KEVLKWESDR…IAREIKIAIE (234 aa)). ATP contacts are provided by residues 121–181 (PDDI…VPIY) and E203. N231 is a 5-amino-1-(5-phospho-beta-D-ribosyl)imidazole-4-carboxamide binding site. Residues E269 and E282 each contribute to the Mg(2+) site.

The protein belongs to the phosphohexose mutase family. It depends on Mg(2+) as a cofactor. Mn(2+) is required as a cofactor.

The catalysed reaction is 5-amino-1-(5-phospho-beta-D-ribosyl)imidazole-4-carboxamide + formate + ATP = 5-formamido-1-(5-phospho-D-ribosyl)imidazole-4-carboxamide + ADP + phosphate. Its pathway is purine metabolism; IMP biosynthesis via de novo pathway; 5-formamido-1-(5-phospho-D-ribosyl)imidazole-4-carboxamide from 5-amino-1-(5-phospho-D-ribosyl)imidazole-4-carboxamide (formate route): step 1/1. Catalyzes the ATP- and formate-dependent formylation of 5-aminoimidazole-4-carboxamide-1-beta-d-ribofuranosyl 5'-monophosphate (AICAR) to 5-formaminoimidazole-4-carboxamide-1-beta-d-ribofuranosyl 5'-monophosphate (FAICAR) in the absence of folates. The protein is 5-formaminoimidazole-4-carboxamide-1-(beta)-D-ribofuranosyl 5'-monophosphate synthetase of Pyrococcus horikoshii (strain ATCC 700860 / DSM 12428 / JCM 9974 / NBRC 100139 / OT-3).